The chain runs to 667 residues: MLRDKLKLLQAQIEQERSKSNYRVNEVKEEFDKEIQKLRQQLQSLEDEKKFLVLESRGINAVNQRIKTSPPEAFSRVSSQHRALNTPDSSHIQEHIPKKRKTEISTQPSIVLNPNRVIKDEVSAFFDCLYVHRIVGVELSTIEILNCIKFEHIDEFNYKLLKINKDTSIGSGIVDFLQSCKKNMKLNELVDSVLEHLATLIKAIIINDQELNFSVPFLVALMVQTILFRPSAVSVNSLKDLFIFTCDLIRKFQIVLKKPLHKSPLEVDLGPQIFQYELIDNLILVYSFDLLESTTKVIRIQQLSETLYMEFFDESLMKSLEAVYKLTLTISFKPVINVIYSMVAVFVTITNIMNNDNLSKPFGSSKWWSDLLTRLYQLLGKRILNFHVFDDTNTNNMHIDRFFDFYSLLRNMGTNSVSPLLAQLVTRGEIKGIPNIVLKDDIIDKYESKKEKGVLSDNLELEKWFVYLKDDILSIIENLMGYFKKDSKITNGEILINLTKLISVEQSQFMDHLIDQDTDVFAVRMNLVEHALSIIYRMWKYYEENITQESIKEVESELVMSLWRIIVCKHASKKICKDDLMEHRILINQMENLHLQDTIDLYEDAFEDMPEYIKEELECSINNGTQQKMQVQYDDIYIEMARYILESKLTNFISVENTDSLYLSMGF.

A coiled-coil region spans residues Lys-28–Glu-55.

Forms a complex with MEC1.

It is found in the cytoplasm. The protein resides in the nucleus. In terms of biological role, forms a complex with the serine/threonine kinase MEC1 which activates checkpoint signaling upon genotoxic stresses. The MEC1-LCD1 complex is recruited to DNA lesions in order to initiates the DNA repair by homologous recombination. Required for cell growth and meiotic recombination. The sequence is that of DNA damage checkpoint protein LCD1 (LCD1) from Candida glabrata (strain ATCC 2001 / BCRC 20586 / JCM 3761 / NBRC 0622 / NRRL Y-65 / CBS 138) (Yeast).